A 575-amino-acid chain; its full sequence is MNKIDKDILKIFESKENEQFDEDQEKDEKKMNEVDFYSILNISRNATDDEIKIAFKKLAFTYHPDKQTNEELKKETQDIFTLITLAKDTLSDPKLRAIYDQFGLEGIEHSKAIVNKYKEVDKLLQALDRIQKENEEDKLIQSFSATGSQSISLAYHHEYRHFFFKTLKSEAQFDIKTQKYGSFEFVPSITRKKNLAWFGLETSYLYPITQNTELFLSNNYNEANEGSIQTIGLKSLLSANTYGSIHCAFFDSFQPARFGCLLTRQLSPTITAIFRGTLQKEFWQGSLTLKRIVQKRLFEITIDSSNLGGLSGSITRDIPISKKSRISFSVGGYGGGFPLYSAGQHGFTGAAIGFKRKITKVFDIDLSMHVNPSRYLYVIGLHHRYQSLEIPIPIYSDLSLSTSLLFFTLPAVTLSLLKYLVVKPLMKKKEQKKIMEKKEKYADQARKAKRKAEMDITLVKQLVENKVLKEKTKNGLIIQEAVYGKLDEKVDHSDPFSVEFPPTIDVTIPLQYLVEDSKLVLHGNNKKSDLLGFWDPRISEEKQLKVTYFFQNRLHRITVNDIDQLLIPLKSHLIQ.

Residues 35 to 103 form the J domain; the sequence is DFYSILNISR…KLRAIYDQFG (69 aa). Residues 427–456 adopt a coiled-coil conformation; the sequence is KKKEQKKIMEKKEKYADQARKAKRKAEMDI.

It belongs to the DNAJC11 family.

The chain is DnaJ homolog subfamily C member 11 homolog (dnajc11) from Dictyostelium discoideum (Social amoeba).